An 808-amino-acid chain; its full sequence is MVPNKHLLLIILSFSTACGQTTPTTAVEKNKTQAIYQEYFKYRVCSASTTGELFRFDLDRTCPSTEDKVHKEGILLVYKKNIVPYIFKVRRYKKITTSVRIFNGWTREGVAITNKWELSRAVPKYEIDIMDKTYQCHNCMQIEVNGMLNSYYDRDGNNKTVDLKPVDGLTGAITRYISQPKVFADPGWLWGTYRTRTTVNCEIVDMFARSADPYTYFVTALGDTVEVSPFCDVDNSCPNATDVLSVQIDLNHTVVDYGNRATSQQHKKRIFAHTLDYSVSWEAVNKSASVCSMVFWKSFQRAIQTEHDLTYHFIANEITAGFSTVKEPLANFTSDYNCLMTHINTTLEDKIARVNNTHTPNGTAEYYQTEGGMILVWQPLIAIELEEAMLEATTSPVTPSAPTSSSRSKRAIRSIRDVSAGSENNVFLSQIQYAYDKLRQSINNVLEELAITWCREQVRQTMVWYEIAKINPTSVMTAIYGKPVSRKALGDVISVTECINVDQSSVSIHKSLKTENNDICYSRPPVTFKFVNSSQLFKGQLGARNEILLSESLVENCHQNAETFFTAKNETYHFKNYVHVETLPVNNISTLDTFLALNLTFIENIDFKAVELYSSGERKLANVFDLETMFREYNYYAQSISGLRKDFDNSQRNNRDRIIQDFSEILADLGSIGKVIVNVASGAFSLFGGIVTGILNFIKNPLGGMFTFLLIGAVIILVILLVRRTNNMSQAPIRMIYPDVEKSKSTVTPMEPETIKQILLGMHNMQQEAYKKKEEQRAARPSIFRQAAETFLRKRSGYKQISTEDKIV.

A signal peptide spans 1–19 (MVPNKHLLLIILSFSTACG). Residues 20-701 (QTTPTTAVEK…TGILNFIKNP (682 aa)) are Virion surface-facing. Residue asparagine 30 is glycosylated (N-linked (GlcNAc...) asparagine; by host). Disulfide bonds link cysteine 45/cysteine 498, cysteine 62/cysteine 454, cysteine 136/cysteine 201, cysteine 291/cysteine 338, and cysteine 520/cysteine 557. The tract at residues 101 to 107 (IFNGWTR) is involved in fusion and/or binding to host membrane. An N-linked (GlcNAc...) asparagine; by host glycan is attached at asparagine 158. The interval 187–195 (GWLWGTYRT) is involved in fusion and/or binding to host membrane. N-linked (GlcNAc...) asparagine; by host glycosylation is found at asparagine 239, asparagine 251, asparagine 285, asparagine 331, asparagine 344, asparagine 355, asparagine 361, asparagine 532, asparagine 569, asparagine 587, and asparagine 598. 2 hydrophobic membrane proximal region regions span residues 647-699 (FDNS…NFIK) and 658-698 (IIQD…LNFI). A helical membrane pass occupies residues 702–722 (LGGMFTFLLIGAVIILVILLV). Topologically, residues 723–808 (RRTNNMSQAP…KQISTEDKIV (86 aa)) are intravirion.

Belongs to the herpesviridae glycoprotein B family. In terms of assembly, homotrimer; disulfide-linked. Binds to heparan sulfate proteoglycans. Interacts with gH/gL heterodimer. Post-translationally, a proteolytic cleavage by host furin generates two subunits that remain linked by disulfide bonds.

The protein localises to the virion membrane. Its subcellular location is the host cell membrane. It localises to the host endosome membrane. The protein resides in the host Golgi apparatus membrane. Envelope glycoprotein that forms spikes at the surface of virion envelope. Essential for the initial attachment to heparan sulfate moieties of the host cell surface proteoglycans. Involved in fusion of viral and cellular membranes leading to virus entry into the host cell. Following initial binding to its host receptors, membrane fusion is mediated by the fusion machinery composed at least of gB and the heterodimer gH/gL. May be involved in the fusion between the virion envelope and the outer nuclear membrane during virion egress. This chain is Envelope glycoprotein B, found in Saimiriine herpesvirus 2 (strain 11) (SaHV-2).